The primary structure comprises 143 residues: Photosystem I reaction center subunit IV B, chloroplastic (143 aa).

The N-terminal 51 residues, 1 to 51, are a transit peptide targeting the chloroplast; sequence MASSSMASAASGFMVATPNIATSNTAPRTSMLFFSSSKNNTTTNFPRLVVR. Low complexity predominate over residues 56–75; sequence AAPPAATATAEGEAPPAKAA. The disordered stretch occupies residues 56–86; sequence AAPPAATATAEGEAPPAKAAKPPPIGPKRGT.

This sequence belongs to the PsaE family. In terms of processing, 2 isoforms exists (ratio 1:1). With or without the N-terminal alanine.

It localises to the plastid. Its subcellular location is the chloroplast thylakoid membrane. Functionally, stabilizes the interaction between PsaC and the PSI core, assists the docking of the ferredoxin to PSI and interacts with ferredoxin-NADP oxidoreductase. This Nicotiana sylvestris (Wood tobacco) protein is Photosystem I reaction center subunit IV B, chloroplastic (PSAEB).